A 355-amino-acid polypeptide reads, in one-letter code: Peptide chain release factor 1 (355 aa).

The residue at position 230 (glutamine 230) is an N5-methylglutamine.

Belongs to the prokaryotic/mitochondrial release factor family. In terms of processing, methylated by PrmC. Methylation increases the termination efficiency of RF1.

The protein localises to the cytoplasm. Its function is as follows. Peptide chain release factor 1 directs the termination of translation in response to the peptide chain termination codons UAG and UAA. The protein is Peptide chain release factor 1 of Geobacter sulfurreducens (strain ATCC 51573 / DSM 12127 / PCA).